The sequence spans 639 residues: 1-deoxy-D-xylulose-5-phosphate synthase (639 aa).

Residues His76 and 117 to 119 (AHS) each bind thiamine diphosphate. Residue Asp148 participates in Mg(2+) binding. Residues 149–150 (GS), Asn181, Tyr288, and Glu370 contribute to the thiamine diphosphate site. Asn181 is a Mg(2+) binding site.

This sequence belongs to the transketolase family. DXPS subfamily. In terms of assembly, homodimer. Mg(2+) serves as cofactor. It depends on thiamine diphosphate as a cofactor.

The catalysed reaction is D-glyceraldehyde 3-phosphate + pyruvate + H(+) = 1-deoxy-D-xylulose 5-phosphate + CO2. It participates in metabolic intermediate biosynthesis; 1-deoxy-D-xylulose 5-phosphate biosynthesis; 1-deoxy-D-xylulose 5-phosphate from D-glyceraldehyde 3-phosphate and pyruvate: step 1/1. Functionally, catalyzes the acyloin condensation reaction between C atoms 2 and 3 of pyruvate and glyceraldehyde 3-phosphate to yield 1-deoxy-D-xylulose-5-phosphate (DXP). The chain is 1-deoxy-D-xylulose-5-phosphate synthase from Leptothrix cholodnii (strain ATCC 51168 / LMG 8142 / SP-6) (Leptothrix discophora (strain SP-6)).